We begin with the raw amino-acid sequence, 98 residues long: Large ribosomal subunit protein uL23 (98 aa).

Belongs to the universal ribosomal protein uL23 family. In terms of assembly, part of the 50S ribosomal subunit. Contacts protein L29, and trigger factor when it is bound to the ribosome.

Functionally, one of the early assembly proteins it binds 23S rRNA. One of the proteins that surrounds the polypeptide exit tunnel on the outside of the ribosome. Forms the main docking site for trigger factor binding to the ribosome. The protein is Large ribosomal subunit protein uL23 of Streptococcus pyogenes serotype M1.